The sequence spans 868 residues: Metabotropic glutamate receptor 6 (868 aa).

Positions 1–20 (MARLLLALLAWLAQMSPVRA) are cleaved as a signal peptide. Residues 21–576 (AGSVRLAGGL…VVRLTWSSPW (556 aa)) are Extracellular-facing. A disulfide bridge connects residues Cys-48 and Cys-90. Residues Ser-145, 166-168 (AST), and Tyr-216 each bind L-glutamate. 7 disulfides stabilise this stretch: Cys-235/Cys-527, Cys-358/Cys-374, Cys-414/Cys-421, Cys-509/Cys-528, Cys-513/Cys-531, Cys-534/Cys-546, and Cys-549/Cys-562. Asn-287 carries N-linked (GlcNAc...) asparagine glycosylation. Asp-298 contacts L-glutamate. Lys-391 is an L-glutamate binding site. Residues Asn-442 and Asn-470 are each glycosylated (N-linked (GlcNAc...) asparagine). An N-linked (GlcNAc...) asparagine glycan is attached at Asn-558. A helical membrane pass occupies residues 577–599 (AAPPLLLAVLGIMATTTVVGTFV). Over 600 to 613 (RHNNTPIVRASGRE) the chain is Cytoplasmic. The helical transmembrane segment at 614–634 (LSYVLLTGIFLIYAVTFLMVA) threads the bilayer. The Extracellular portion of the chain corresponds to 635–645 (EPGAAVCATRR). Residues 646–664 (LFLGLGTTLSYSALLTKTN) form a helical membrane-spanning segment. Topologically, residues 665–688 (RIYRIFEQGKRSVTPPPFISPTSQ) are cytoplasmic. A helical membrane pass occupies residues 689–709 (LVITFSLTSLQVVGVIAWLGA). Residues 710–739 (QPPHSVIDYEEQRTVDPEQARGVLKCDMSD) are Extracellular-facing. A helical transmembrane segment spans residues 740–761 (LSLIGCLGYSLLLMVTCTVYAI). Residues 762–774 (KARGVPETFNEAK) lie on the Cytoplasmic side of the membrane. A helical membrane pass occupies residues 775–797 (PIGFTMYTTCIVWLAFVPIFFGT). The Extracellular portion of the chain corresponds to 798-810 (AQSAEKIYIQTTT). Residues 811–836 (LTVSLSLSASVSLGMLYVPKTYVILF) form a helical membrane-spanning segment. The Cytoplasmic portion of the chain corresponds to 837-868 (HPEQNVQKRKRSLKTTSTVAAPPKGADTEDPK). Positions 845-868 (RKRSLKTTSTVAAPPKGADTEDPK) are disordered.

The protein belongs to the G-protein coupled receptor 3 family. Homodimer. Interacts with GPR179. Interacts with photoreceptor synaptic protein LRIT1 (via its N-terminal extracellular domain).

Its subcellular location is the cell membrane. The protein localises to the endoplasmic reticulum membrane. It is found in the golgi apparatus membrane. The protein resides in the cell projection. It localises to the dendrite. Functionally, G-protein coupled receptor for glutamate. Ligand binding causes a conformation change that triggers signaling via guanine nucleotide-binding proteins (G proteins) and modulates the activity of down-stream effectors, such as adenylate cyclase. Signaling inhibits adenylate cyclase activity. Signaling stimulates TRPM1 channel activity and Ca(2+) uptake. Required for normal vision. In Oryctolagus cuniculus (Rabbit), this protein is Metabotropic glutamate receptor 6 (GRM6).